We begin with the raw amino-acid sequence, 98 residues long: NADH-ubiquinone oxidoreductase chain 4L (98 aa).

A run of 3 helical transmembrane segments spans residues 1 to 21, 27 to 47, and 61 to 81; these read MTPT…GMLT, VASL…ATLI, and IILL…LISI.

It belongs to the complex I subunit 4L family. Core subunit of respiratory chain NADH dehydrogenase (Complex I) which is composed of 45 different subunits.

It is found in the mitochondrion inner membrane. The catalysed reaction is a ubiquinone + NADH + 5 H(+)(in) = a ubiquinol + NAD(+) + 4 H(+)(out). Functionally, core subunit of the mitochondrial membrane respiratory chain NADH dehydrogenase (Complex I) which catalyzes electron transfer from NADH through the respiratory chain, using ubiquinone as an electron acceptor. Part of the enzyme membrane arm which is embedded in the lipid bilayer and involved in proton translocation. The polypeptide is NADH-ubiquinone oxidoreductase chain 4L (MT-ND4L) (Macaca fascicularis (Crab-eating macaque)).